Consider the following 390-residue polypeptide: NADH-dependent butanol dehydrogenase B (390 aa).

This sequence belongs to the iron-containing alcohol dehydrogenase family. In terms of assembly, homodimer.

The protein operates within alcohol metabolism; butanol biosynthesis. This chain is NADH-dependent butanol dehydrogenase B (bdhB), found in Clostridium acetobutylicum (strain ATCC 824 / DSM 792 / JCM 1419 / IAM 19013 / LMG 5710 / NBRC 13948 / NRRL B-527 / VKM B-1787 / 2291 / W).